An 87-amino-acid polypeptide reads, in one-letter code: Small ribosomal subunit protein bS20 (87 aa).

Residues 1-27 (MANIKSAKKRALQSERRRQHNASRRSM) are compositionally biased toward basic residues. The disordered stretch occupies residues 1 to 31 (MANIKSAKKRALQSERRRQHNASRRSMTRTS).

The protein belongs to the bacterial ribosomal protein bS20 family.

In terms of biological role, binds directly to 16S ribosomal RNA. This chain is Small ribosomal subunit protein bS20, found in Pseudoalteromonas atlantica (strain T6c / ATCC BAA-1087).